We begin with the raw amino-acid sequence, 522 residues long: MKPFNELVGKLSDAASRQALKSMHRGIEREALRIEKSGHLALDKHPKALGSALMHSRITTDYSESLLEFITPVFEDIDELVEDLTLTHAYSVRHLNGQRLWPVSMPCYLGDAGDIPIADYGSSNTGQMKRLYRKGLTYRYGAQMQIISGVHFNFSVSDQLWNRLYELSDTSLSLEEFISESYFGLIRNYRRLVWVLPYLFGASPALCSTFIQDPKTNEFPFEVIGNGTLYLPYATSLRMSDLGYTNQEQDNLNISYNSLACYLEGMKSAINMPSAKFAKIGVKVDGEYRQLNANILQIENEFYSPIRAKRVAKGNEKPSESLARAGVEYIEVRALDVNPYSAVGIEKSQIRFLDLFLLNCLLQPSPASDASEEAEIAANLQAVVLEGRKPGLKLTRAGEEVSLSGWLESLFGNLNDIAKLLDDEGQDDYQVALAKWQKAVNDPDATLSGQIIKGLKDNQIDHGDWVLQLAEQYHQELKGYPLSEAVTMRYEQDAQASLEKQARLEAEPSVSFDDFLADYFKA.

The protein belongs to the glutamate--cysteine ligase type 1 family. Type 1 subfamily.

The enzyme catalyses L-cysteine + L-glutamate + ATP = gamma-L-glutamyl-L-cysteine + ADP + phosphate + H(+). It functions in the pathway sulfur metabolism; glutathione biosynthesis; glutathione from L-cysteine and L-glutamate: step 1/2. The polypeptide is Glutamate--cysteine ligase (Shewanella halifaxensis (strain HAW-EB4)).